The primary structure comprises 551 residues: Bestrophin-1 (551 aa).

Residues 1–31 (MTITYTNKVANARLGSFSSLLLCWRGSIYKL) are Cytoplasmic-facing. Ala10 contacts Ca(2+). The helical transmembrane segment at 32–51 (LYGEFLVFIFLYYSIRGLYR) threads the bilayer. Residues 52-60 (MVLSSDQQL) lie on the Extracellular side of the membrane. The helical transmembrane segment at 61-82 (LFEKLALYCDSYIQLIPISFVL) threads the bilayer. The Cytoplasmic segment spans residues 83–237 (GFYVTLVVSR…DWISIPLVYT (155 aa)). Residues 238-255 (QVVTVAVYSFFLACLIGR) form a helical membrane-spanning segment. Residues 256–274 (QFLNPNKDYPGHEMDLVVP) lie on the Extracellular side of the membrane. Residues 275–288 (VFTILQFLFYMGWL) form a helical membrane-spanning segment. Over 289 to 551 (KVAEQLINPF…EAGTKPVLYE (263 aa)) the chain is Cytoplasmic. Residues Gln293, Asn296, Asp301, and Asp304 each contribute to the Ca(2+) site. Residues 346–379 (PYTAASARSRRHSFMGSTFNISLKKEDLELWSKE) are auto-inhibitory segment. A disordered region spans residues 459 to 489 (SHCGPQAPSSHPTEQSAPSSSDTGDGPSTDY). The span at 465-475 (APSSHPTEQSA) shows a compositional bias: polar residues. The segment covering 476 to 488 (PSSSDTGDGPSTD) has biased composition (low complexity).

This sequence belongs to the anion channel-forming bestrophin (TC 1.A.46) family. Calcium-sensitive chloride channel subfamily. In terms of assembly, interacts with YWHAG; this interaction promotes the ligand-gated L-glutamate channel activity leading to the positive regulation of NMDA glutamate receptor activity through the L-glutamate secretion.

It is found in the cell membrane. The protein resides in the basolateral cell membrane. It carries out the reaction 4-aminobutanoate(in) = 4-aminobutanoate(out). The catalysed reaction is L-glutamate(out) = L-glutamate(in). The enzyme catalyses chloride(in) = chloride(out). It catalyses the reaction hydrogencarbonate(in) = hydrogencarbonate(out). It carries out the reaction D-serine(in) = D-serine(out). Its activity is regulated as follows. Inactivated by sulfhydryl-reactive agents. Its function is as follows. Ligand-gated anion channel that allows the movement of anions across cell membranes when activated by calcium (Ca2+). Allows the movement of chloride and hydrogencarbonate. Found in a partially open conformation leading to significantly smaller chloride movement. Upon F2R/PAR-1 activation, the sequestered calcium is released into the cytosol of astrocytes, leading to the (Ca2+)-dependent release of L-glutamate into the synaptic cleft that targets the neuronal postsynaptic GRIN2A/NMDAR receptor resulting in the synaptic plasticity regulation. Upon activation of the norepinephrine-alpha-1 adrenergic receptor signaling pathway, transports as well D-serine than L-glutamate in a (Ca2+)-dependent manner, leading to activation of adjacent NMDAR receptors and therefore regulates the heterosynaptic long-term depression and metaplasticity during initial memory acquisition. Releases the 4-aminobutanoate neurotransmitter in a (Ca2+)-dependent manner, and participates in its tonic release from cerebellar glial cells. The chain is Bestrophin-1 from Mus musculus (Mouse).